We begin with the raw amino-acid sequence, 154 residues long: UPF0178 protein SPO3827 (154 aa).

It belongs to the UPF0178 family.

The polypeptide is UPF0178 protein SPO3827 (Ruegeria pomeroyi (strain ATCC 700808 / DSM 15171 / DSS-3) (Silicibacter pomeroyi)).